The following is a 44-amino-acid chain: Photosystem II reaction center protein J (44 aa).

Residues 12 to 32 (IPLWIVGFVVGSLALGLLGIL) form a helical membrane-spanning segment.

This sequence belongs to the PsbJ family. In terms of assembly, PSII is composed of 1 copy each of membrane proteins PsbA, PsbB, PsbC, PsbD, PsbE, PsbF, PsbH, PsbI, PsbJ, PsbK, PsbL, PsbM, PsbT, PsbY, PsbZ, Psb30/Ycf12, at least 3 peripheral proteins of the oxygen-evolving complex and a large number of cofactors. It forms dimeric complexes.

The protein resides in the plastid. Its subcellular location is the chloroplast thylakoid membrane. Its function is as follows. One of the components of the core complex of photosystem II (PSII). PSII is a light-driven water:plastoquinone oxidoreductase that uses light energy to abstract electrons from H(2)O, generating O(2) and a proton gradient subsequently used for ATP formation. It consists of a core antenna complex that captures photons, and an electron transfer chain that converts photonic excitation into a charge separation. The protein is Photosystem II reaction center protein J of Bigelowiella natans (Pedinomonas minutissima).